The primary structure comprises 335 residues: Transcriptional activator NphR (335 aa).

One can recognise an HTH araC/xylS-type domain in the interval 231-329 (TRVQRVIEQN…GSSPGLYRKE (99 aa)). 2 DNA-binding regions (H-T-H motif) span residues 249–270 (SDIAAAAGMSLRTVHKLFNAEG) and 296–319 (VADVSECAGFRDVSHFSRLFRSTF).

Functionally, transcriptional activator of nphA1 and nphA2 involved in the degradation of 4-nitrophenol (4-NP). This Rhodococcus sp protein is Transcriptional activator NphR (nphR).